A 510-amino-acid chain; its full sequence is Pantetheinase (510 aa).

The signal sequence occupies residues Met1–Ser22. The CN hydrolase domain maps to Tyr31–Ser307. Residue Asn39 is glycosylated (N-linked (GlcNAc...) asparagine). Glu80 functions as the Proton acceptor in the catalytic mechanism. N-linked (GlcNAc...) asparagine glycosylation is found at Asn87 and Asn147. The active-site Proton donor is the Lys179. Residue Asn201 is glycosylated (N-linked (GlcNAc...) asparagine). Catalysis depends on Cys212, which acts as the Nucleophile. Asn316 and Asn354 each carry an N-linked (GlcNAc...) asparagine glycan. Asp492 carries GPI-anchor amidated aspartate lipidation. The propeptide at Leu493–Lys510 is removed in mature form. The O-linked (GalNAc...) threonine glycan is linked to Thr504.

Belongs to the carbon-nitrogen hydrolase superfamily. BTD/VNN family. Monomer.

It is found in the cell membrane. The enzyme catalyses (R)-pantetheine + H2O = cysteamine + (R)-pantothenate. Functionally, amidohydrolase that hydrolyzes specifically one of the carboamide linkages in D-pantetheine thus recycling pantothenic acid (vitamin B5) and releasing cysteamine. This chain is Pantetheinase (VNN1), found in Bos taurus (Bovine).